The primary structure comprises 122 residues: Large ribosomal subunit protein uL18 (122 aa).

The interval 1–25 (MSTLSRKQQTQKRHRRLRRHLSGTA) is disordered. Basic residues predominate over residues 9–21 (QTQKRHRRLRRHL).

This sequence belongs to the universal ribosomal protein uL18 family. Part of the 50S ribosomal subunit; part of the 5S rRNA/L5/L18/L25 subcomplex. Contacts the 5S and 23S rRNAs.

Functionally, this is one of the proteins that bind and probably mediate the attachment of the 5S RNA into the large ribosomal subunit, where it forms part of the central protuberance. The polypeptide is Large ribosomal subunit protein uL18 (Synechococcus sp. (strain CC9311)).